The following is a 128-amino-acid chain: Large ribosomal subunit protein uL22 (128 aa).

Belongs to the universal ribosomal protein uL22 family. In terms of assembly, part of the 50S ribosomal subunit.

Functionally, this protein binds specifically to 23S rRNA; its binding is stimulated by other ribosomal proteins, e.g. L4, L17, and L20. It is important during the early stages of 50S assembly. It makes multiple contacts with different domains of the 23S rRNA in the assembled 50S subunit and ribosome. The globular domain of the protein is located near the polypeptide exit tunnel on the outside of the subunit, while an extended beta-hairpin is found that lines the wall of the exit tunnel in the center of the 70S ribosome. The polypeptide is Large ribosomal subunit protein uL22 (Nitrobacter hamburgensis (strain DSM 10229 / NCIMB 13809 / X14)).